The primary structure comprises 118 residues: Basic phospholipase A2 4 (118 aa).

Intrachain disulfides connect Cys-11–Cys-71, Cys-27–Cys-117, Cys-29–Cys-45, Cys-44–Cys-98, Cys-51–Cys-91, Cys-60–Cys-84, and Cys-78–Cys-89. 3 residues coordinate Ca(2+): Tyr-28, Gly-30, and Gly-32. The active site involves His-48. Ca(2+) is bound at residue Asp-49. Residue Asp-92 is part of the active site.

Belongs to the phospholipase A2 family. Group I subfamily. D49 sub-subfamily. In terms of assembly, monomer. Requires Ca(2+) as cofactor. Expressed by the venom gland.

Its subcellular location is the secreted. It catalyses the reaction a 1,2-diacyl-sn-glycero-3-phosphocholine + H2O = a 1-acyl-sn-glycero-3-phosphocholine + a fatty acid + H(+). PLA2 catalyzes the calcium-dependent hydrolysis of the 2-acyl groups in 3-sn-phosphoglycerides. The chain is Basic phospholipase A2 4 from Laticauda semifasciata (Black-banded sea krait).